The primary structure comprises 78 residues: Cell division topological specificity factor (78 aa).

Belongs to the MinE family.

In terms of biological role, prevents the cell division inhibition by proteins MinC and MinD at internal division sites while permitting inhibition at polar sites. This ensures cell division at the proper site by restricting the formation of a division septum at the midpoint of the long axis of the cell. This is Cell division topological specificity factor from Helicobacter hepaticus (strain ATCC 51449 / 3B1).